The chain runs to 520 residues: Pantetheine hydrolase VNN2 (520 aa).

Positions 1–22 (MVTSSFPISVAVFALITLQVGT) are cleaved as a signal peptide. One can recognise a CN hydrolase domain in the interval 31–306 (YEHAVILPNK…GKLLLSEVDS (276 aa)). Asparagine 39 carries N-linked (GlcNAc...) asparagine glycosylation. Catalysis depends on glutamate 80, which acts as the Proton acceptor. The Proton donor role is filled by lysine 179. Cysteine 211 functions as the Nucleophile in the catalytic mechanism. 5 N-linked (GlcNAc...) asparagine glycosylation sites follow: asparagine 273, asparagine 347, asparagine 357, asparagine 411, and asparagine 468. The GPI-anchor amidated cysteine moiety is linked to residue cysteine 493. A propeptide spans 494–520 (GTSNSAITYLLIFILLMIIALQNIVML) (removed in mature form).

It belongs to the carbon-nitrogen hydrolase superfamily. BTD/VNN family. Widely expressed with higher expression in spleen and blood.

It is found in the cell membrane. It catalyses the reaction (R)-pantetheine + H2O = cysteamine + (R)-pantothenate. In terms of biological role, amidohydrolase that hydrolyzes specifically one of the carboamide linkages in D-pantetheine thus recycling pantothenic acid (vitamin B5) and releasing cysteamine. Involved in the thymus homing of bone marrow cells. May regulate beta-2 integrin-mediated cell adhesion, migration and motility of neutrophil. The polypeptide is Pantetheine hydrolase VNN2 (Homo sapiens (Human)).